A 53-amino-acid polypeptide reads, in one-letter code: UPF0391 membrane protein Patl_1732 (53 aa).

2 helical membrane-spanning segments follow: residues W4–A24 and A28–M48.

It belongs to the UPF0391 family.

It localises to the cell membrane. The sequence is that of UPF0391 membrane protein Patl_1732 from Pseudoalteromonas atlantica (strain T6c / ATCC BAA-1087).